We begin with the raw amino-acid sequence, 529 residues long: Bifunctional purine biosynthesis protein PurH (529 aa).

The MGS-like domain maps to 1 to 148; sequence MQQRRPVRRA…KNHKDVAIVV (148 aa).

The protein belongs to the PurH family.

It carries out the reaction (6R)-10-formyltetrahydrofolate + 5-amino-1-(5-phospho-beta-D-ribosyl)imidazole-4-carboxamide = 5-formamido-1-(5-phospho-D-ribosyl)imidazole-4-carboxamide + (6S)-5,6,7,8-tetrahydrofolate. The enzyme catalyses IMP + H2O = 5-formamido-1-(5-phospho-D-ribosyl)imidazole-4-carboxamide. It functions in the pathway purine metabolism; IMP biosynthesis via de novo pathway; 5-formamido-1-(5-phospho-D-ribosyl)imidazole-4-carboxamide from 5-amino-1-(5-phospho-D-ribosyl)imidazole-4-carboxamide (10-formyl THF route): step 1/1. It participates in purine metabolism; IMP biosynthesis via de novo pathway; IMP from 5-formamido-1-(5-phospho-D-ribosyl)imidazole-4-carboxamide: step 1/1. This chain is Bifunctional purine biosynthesis protein PurH, found in Salmonella paratyphi B (strain ATCC BAA-1250 / SPB7).